Here is a 257-residue protein sequence, read N- to C-terminus: uncharacterized protein (257 aa).

The N-terminal stretch at 1–22 (MIHSKRLRLWLYLVLLAVFIGA) is a signal peptide. A lipid anchor (N-palmitoyl cysteine) is attached at Cys-23. Residue Cys-23 is the site of S-diacylglycerol cysteine attachment.

The protein belongs to the staphylococcal tandem lipoprotein family.

It localises to the cell membrane. This is an uncharacterized protein from Staphylococcus aureus (strain NCTC 8325 / PS 47).